We begin with the raw amino-acid sequence, 184 residues long: UPF0149 protein PputGB1_5261 (184 aa).

This sequence belongs to the UPF0149 family.

This is UPF0149 protein PputGB1_5261 from Pseudomonas putida (strain GB-1).